A 267-amino-acid chain; its full sequence is MADS-box transcription factor 15 (267 aa).

Positions 1–61 constitute an MADS-box domain; it reads MGRGKVQLKR…GKLYEYATDS (61 aa). Residues 88–178 form the K-box domain; the sequence is EGNWCHEYRK…QKELVERQKN (91 aa). The interval 179–215 is disordered; it reads VRGQQQVGQWDQTQVQAQAQAQPQAQTSSSSSSMLRD. Residues 182–215 are compositionally biased toward low complexity; it reads QQQVGQWDQTQVQAQAQAQPQAQTSSSSSSMLRD.

As to quaternary structure, may interact with the K-box of MADS1 and MADS6.

It localises to the nucleus. Probable transcription factor. This Oryza sativa subsp. japonica (Rice) protein is MADS-box transcription factor 15 (MADS15).